Here is a 178-residue protein sequence, read N- to C-terminus: Large ribosomal subunit protein uL6 (178 aa).

It belongs to the universal ribosomal protein uL6 family. As to quaternary structure, part of the 50S ribosomal subunit.

Its function is as follows. This protein binds to the 23S rRNA, and is important in its secondary structure. It is located near the subunit interface in the base of the L7/L12 stalk, and near the tRNA binding site of the peptidyltransferase center. This Helicobacter pylori (strain HPAG1) protein is Large ribosomal subunit protein uL6.